An 82-amino-acid chain; its full sequence is Acyl carrier protein (82 aa).

A Carrier domain is found at 3-78 (QEIFERVKKV…KAVEHISEKV (76 aa)). Ser38 bears the O-(pantetheine 4'-phosphoryl)serine mark.

It belongs to the acyl carrier protein (ACP) family. In terms of processing, 4'-phosphopantetheine is transferred from CoA to a specific serine of apo-ACP by AcpS. This modification is essential for activity because fatty acids are bound in thioester linkage to the sulfhydryl of the prosthetic group.

It is found in the cytoplasm. The protein operates within lipid metabolism; fatty acid biosynthesis. Functionally, carrier of the growing fatty acid chain in fatty acid biosynthesis. The protein is Acyl carrier protein of Gloeothece citriformis (strain PCC 7424) (Cyanothece sp. (strain PCC 7424)).